We begin with the raw amino-acid sequence, 199 residues long: Recombination protein RecR (199 aa).

Residues 58–73 form a C4-type zinc finger; the sequence is CSVCNNITDVDPCVFC. Residues 81 to 176 form the Toprim domain; it reads RLVCVVEEPT…RLTRIATGVP (96 aa).

Belongs to the RecR family.

In terms of biological role, may play a role in DNA repair. It seems to be involved in an RecBC-independent recombinational process of DNA repair. It may act with RecF and RecO. The polypeptide is Recombination protein RecR (Acidobacterium capsulatum (strain ATCC 51196 / DSM 11244 / BCRC 80197 / JCM 7670 / NBRC 15755 / NCIMB 13165 / 161)).